A 249-amino-acid polypeptide reads, in one-letter code: uncharacterized protein (249 aa).

It belongs to the AIM2 family.

The protein localises to the cytoplasm. Its subcellular location is the nucleus. This is an uncharacterized protein from Schizosaccharomyces pombe (strain 972 / ATCC 24843) (Fission yeast).